A 1135-amino-acid chain; its full sequence is Envelopment polyprotein (1135 aa).

The first 35 residues, 1–35 (MRILKLLELVVKVSLFTIALSSVLLAFLTFRATDA), serve as a signal peptide directing secretion. Topologically, residues 36 to 314 (KVEIIRGDHP…KYSKSIYKQT (279 aa)) are lumenal. Residues 41–43 (RGD) carry the Cell attachment site motif. Asn-116 carries an N-linked (GlcNAc...) asparagine; by host glycan. Cysteines 122 and 156 form a disulfide. Residues 177-195 (LDNKRHFSVGTNFFIPESL) are non-covalent dimerization. N-linked (GlcNAc...) asparagine; by host glycosylation occurs at Asn-210. Cys-224 and Cys-285 are joined by a disulfide. The chain crosses the membrane as a helical span at residues 315–366 (ACINFSWIRLILIALLIYFPIRWLVNKTTKPLFLWYDLMGLITYPVLLLINC). Residues 367-484 (LWKYFPFKCS…VPGCPFLVTS (118 aa)) lie on the Cytoplasmic side of the membrane. The segment at 437-484 (LSLSLLKFVTEILIGLVILSQIPMSMAQTTQCLSGCFYVPGCPFLVTS) is signal for signal peptide peptidase. Over 485-1067 (KFEKCPEKDQ…YFGSFFDTIR (583 aa)) the chain is Lumenal. Residues Asn-588, Asn-605, and Asn-980 are each glycosylated (N-linked (GlcNAc...) asparagine; by host). The helical transmembrane segment at 1068–1088 (VVLLIAFIFLVIYFCSILTSI) threads the bilayer. Residues 1089–1135 (CKGYVKHKSYKSRSKIEDDDEPEIKAPMLMKDTMTRRRPPMDFSHLV) lie on the Cytoplasmic side of the membrane.

The protein belongs to the tospovirus envelope glycoprotein family. As to quaternary structure, homodimer; disulfide-linked. Heterodimer with Glycoprotein C. Interacts with nucleoprotein. In terms of assembly, heterodimer with Glycoprotein N. Interacts with nucleoprotein. In terms of processing, specific enzymatic cleavages in vivo yield mature proteins including Glycoprotein N and Glycoprotein C. Glycosylated with O-linked glycans. Glycosylation is essential for proper subcellular location. Post-translationally, cleaved at acidic pH.

The protein localises to the virion membrane. It is found in the host Golgi apparatus membrane. It localises to the host endoplasmic reticulum membrane. Its function is as follows. Forms the spikes present at the surface of the virion together with Glycoprotein C. They are able to attach the virion to a cell receptor and to promote fusion of membranes after endocytosis of the virion. Plays a role in virus binding and/or entry into the vector midgut. Functionally, forms the spikes present at the surface of the virion together with Glycoprotein N. They are able to attach the virion to a cell receptor and to promote fusion of membranes after endocytosis of the virion. Probable class II fusion protein. This is Envelopment polyprotein (GP) from Frankliniella occidentalis (Western flower thrips).